The chain runs to 547 residues: Chaperonin GroEL (547 aa).

ATP contacts are provided by residues 30–33, Lys51, 87–91, Gly415, and Asp496; these read TLGP and DGTTT.

It belongs to the chaperonin (HSP60) family. In terms of assembly, forms a cylinder of 14 subunits composed of two heptameric rings stacked back-to-back. Interacts with the co-chaperonin GroES.

Its subcellular location is the cytoplasm. The enzyme catalyses ATP + H2O + a folded polypeptide = ADP + phosphate + an unfolded polypeptide.. Its function is as follows. Together with its co-chaperonin GroES, plays an essential role in assisting protein folding. The GroEL-GroES system forms a nano-cage that allows encapsulation of the non-native substrate proteins and provides a physical environment optimized to promote and accelerate protein folding. The sequence is that of Chaperonin GroEL from Actinobacillus pleuropneumoniae serotype 5b (strain L20).